A 537-amino-acid chain; its full sequence is MLSTLQPPRSLSLLPLRRFQISKTIVSAASSKTIDTSVISPPQSQILTTRRSLLSGETTAVEIAKSYLSRIRLTEPQLKCFLHVSENVLKDAQEIDQRIAKGEELGPLAGVLIGVKDNICTQGMPSTAASRILEHYRPPFDATAVKKIKELGGIVVGKTNMDEFGMGSTTEASAFQVTANPWDLSRVPGGSSGGSAAAVAARQCMVSLGSDTGGSVRQPASFCGVVGLKPTYGRVSRFGLMAYASSLDVIGCFGSTVADAGMLLHAISGYDRFDSTSSKQDVPEFQSQFLSVDHFESKPLNGVKVGIIRETLEDGVDSGVRSATQEAASHLEALGCILTEVSLPSFSLGLPAYYVIASSESSSNLSRYDGVRYGNQVMAEELNKLYECSRGEGFGGEVKMRILMGTYALSAGYYDAYYKRAQQVRTLIRKDFKAALEQNDILISPAAPSAAYKIGEKKDDPLAMYAGDIMTVNVNLAGLPAMVLPCGLVEGGPSGLPVGLQMIGAAFDEEKLLKVGHIFEQTLKGSSFVPPLLANVA.

Active-site charge relay system residues include Lys116 and Ser191. Ser215 (acyl-ester intermediate) is an active-site residue.

Belongs to the amidase family. GatA subfamily. In terms of assembly, subunit of the heterotrimeric GatCAB amidotransferase (AdT) complex, composed of A, B and C subunits.

Its subcellular location is the mitochondrion. It is found in the plastid. The protein localises to the chloroplast stroma. It carries out the reaction L-glutamyl-tRNA(Gln) + L-glutamine + ATP + H2O = L-glutaminyl-tRNA(Gln) + L-glutamate + ADP + phosphate + H(+). Allows the formation of correctly charged Gln-tRNA(Gln) through the transamidation of misacylated Glu-tRNA(Gln) in chloroplasts and mitochondria. The reaction takes place in the presence of glutamine and ATP through an activated gamma-phospho-Glu-tRNA(Gln). This chain is Glutamyl-tRNA(Gln) amidotransferase subunit A, chloroplastic/mitochondrial, found in Arabidopsis thaliana (Mouse-ear cress).